The sequence spans 156 residues: MPKESGRKVVATNRKARHNYHVMDTYEAGIALMGTEVKSLREGHASMVDGFCTFYNDELWMEGIHIPEYHQGSWTNHAARRRRKLLLHRDELDKISQKIRESGFTVVPLQLYFLDGRAKVEIAIARGKKDYDKRQTLREQQDKRESLRELRERNRR.

The tract at residues R134–R156 is disordered.

Belongs to the SmpB family.

The protein localises to the cytoplasm. In terms of biological role, required for rescue of stalled ribosomes mediated by trans-translation. Binds to transfer-messenger RNA (tmRNA), required for stable association of tmRNA with ribosomes. tmRNA and SmpB together mimic tRNA shape, replacing the anticodon stem-loop with SmpB. tmRNA is encoded by the ssrA gene; the 2 termini fold to resemble tRNA(Ala) and it encodes a 'tag peptide', a short internal open reading frame. During trans-translation Ala-aminoacylated tmRNA acts like a tRNA, entering the A-site of stalled ribosomes, displacing the stalled mRNA. The ribosome then switches to translate the ORF on the tmRNA; the nascent peptide is terminated with the 'tag peptide' encoded by the tmRNA and targeted for degradation. The ribosome is freed to recommence translation, which seems to be the essential function of trans-translation. The sequence is that of SsrA-binding protein from Paenarthrobacter aurescens (strain TC1).